We begin with the raw amino-acid sequence, 345 residues long: Phosphate acyltransferase (345 aa).

The protein belongs to the PlsX family. As to quaternary structure, homodimer. Probably interacts with PlsY.

It is found in the cytoplasm. It catalyses the reaction a fatty acyl-[ACP] + phosphate = an acyl phosphate + holo-[ACP]. The protein operates within lipid metabolism; phospholipid metabolism. In terms of biological role, catalyzes the reversible formation of acyl-phosphate (acyl-PO(4)) from acyl-[acyl-carrier-protein] (acyl-ACP). This enzyme utilizes acyl-ACP as fatty acyl donor, but not acyl-CoA. The protein is Phosphate acyltransferase of Wolbachia pipientis wMel.